The primary structure comprises 266 residues: 3-methyl-2-oxobutanoate hydroxymethyltransferase (266 aa).

Residues aspartate 47 and aspartate 86 each coordinate Mg(2+). Residues 47–48 (DS), aspartate 86, and lysine 114 contribute to the 3-methyl-2-oxobutanoate site. Mg(2+) is bound at residue glutamate 116. Glutamate 183 (proton acceptor) is an active-site residue.

It belongs to the PanB family. Homodecamer; pentamer of dimers. It depends on Mg(2+) as a cofactor.

The protein localises to the cytoplasm. The enzyme catalyses 3-methyl-2-oxobutanoate + (6R)-5,10-methylene-5,6,7,8-tetrahydrofolate + H2O = 2-dehydropantoate + (6S)-5,6,7,8-tetrahydrofolate. It participates in cofactor biosynthesis; (R)-pantothenate biosynthesis; (R)-pantoate from 3-methyl-2-oxobutanoate: step 1/2. Catalyzes the reversible reaction in which hydroxymethyl group from 5,10-methylenetetrahydrofolate is transferred onto alpha-ketoisovalerate to form ketopantoate. The chain is 3-methyl-2-oxobutanoate hydroxymethyltransferase from Idiomarina loihiensis (strain ATCC BAA-735 / DSM 15497 / L2-TR).